Consider the following 513-residue polypeptide: Histidine ammonia-lyase (513 aa).

Positions 143-145 (ASG) form a cross-link, 5-imidazolinone (Ala-Gly). Serine 144 is subject to 2,3-didehydroalanine (Ser).

It belongs to the PAL/histidase family. In terms of processing, contains an active site 4-methylidene-imidazol-5-one (MIO), which is formed autocatalytically by cyclization and dehydration of residues Ala-Ser-Gly.

Its subcellular location is the cytoplasm. The catalysed reaction is L-histidine = trans-urocanate + NH4(+). The protein operates within amino-acid degradation; L-histidine degradation into L-glutamate; N-formimidoyl-L-glutamate from L-histidine: step 1/3. This Paracoccus denitrificans (strain Pd 1222) protein is Histidine ammonia-lyase.